The primary structure comprises 407 residues: Peptidase T (407 aa).

His82 is a binding site for Zn(2+). Asp84 is an active-site residue. Asp143 contributes to the Zn(2+) binding site. Glu177 functions as the Proton acceptor in the catalytic mechanism. Glu178, Asp200, and His382 together coordinate Zn(2+).

Belongs to the peptidase M20B family. It depends on Zn(2+) as a cofactor.

The protein resides in the cytoplasm. The catalysed reaction is Release of the N-terminal residue from a tripeptide.. In terms of biological role, cleaves the N-terminal amino acid of tripeptides. The sequence is that of Peptidase T from Streptococcus uberis (strain ATCC BAA-854 / 0140J).